A 471-amino-acid chain; its full sequence is MASLRSATALSRLRSRAGQQSNLSNSVRWLQMQSSADLDLHSQLKEMIPEQQERLKKVKSDLGKAQLGNITIDVVIGGMRGMTGLLWETSLLDPDEGIRFRGLSIPECQKLLPAAKPDGEPLPEGLLWLLLTGKVPSKEQVDGLSKELRDRATVPDYVYKAIDALPVSAHPMTQFASGVMALQVQSEFQEAYEKGIHKSKSWEPTSEDSLNLIARVPVVAAYVYQRIYKDGKIIPKDDSLDYGGNFSHMLGFDDPKMLELMRLYVTIHSDHEGGNVSAHTGHLVASALSDPYLSFLAALNGLAGPLHGLANQEVLLWIKSVVDECGENVTTEQLKDYVWKTLNSGKVVPGFGHGVLRKTDPRYTCQREFALKHLPDDPLFQLVSKLYEVVPPILTKLGKVKNPWPNVDAHSGVLLNHFGLAEARYYTVLFGVSRSLGICSQLIWDRALGLPLERPKSVTLDWIEKNCKKAA.

The N-terminal 18 residues, 1 to 18, are a transit peptide targeting the mitochondrion; it reads MASLRSATALSRLRSRAG. Active-site residues include His307, His353, and Asp408.

This sequence belongs to the citrate synthase family. Homodimer.

The protein resides in the mitochondrion matrix. It carries out the reaction oxaloacetate + acetyl-CoA + H2O = citrate + CoA + H(+). It functions in the pathway carbohydrate metabolism; tricarboxylic acid cycle; isocitrate from oxaloacetate: step 1/2. In Citrus maxima (Pomelo), this protein is Citrate synthase, mitochondrial (CIT).